A 444-amino-acid polypeptide reads, in one-letter code: Probable D-serine dehydratase (444 aa).

Lys118 carries the N6-(pyridoxal phosphate)lysine modification.

This sequence belongs to the serine/threonine dehydratase family. DsdA subfamily. Pyridoxal 5'-phosphate is required as a cofactor.

The catalysed reaction is D-serine = pyruvate + NH4(+). The sequence is that of Probable D-serine dehydratase from Acinetobacter baumannii (strain ACICU).